The primary structure comprises 88 residues: Large ribosomal subunit protein bL27 (88 aa).

Belongs to the bacterial ribosomal protein bL27 family.

The sequence is that of Large ribosomal subunit protein bL27 from Acidobacterium capsulatum (strain ATCC 51196 / DSM 11244 / BCRC 80197 / JCM 7670 / NBRC 15755 / NCIMB 13165 / 161).